The primary structure comprises 473 residues: Putative F-box/LRR-repeat protein At3g59170 (473 aa).

The region spanning 6–54 is the F-box domain; sequence KDMINVLPDALLCHILSFLTTKEAASTSLLSRRWRYLLAFVPNLEFDDS. LRR repeat units follow at residues 168 to 194, 196 to 221, 229 to 254, 333 to 364, and 365 to 390; these read TIKI…YLQS, MFDE…VLDG, SFTV…GYMH, VLYL…TIKS, and DPNV…VFQG.

The chain is Putative F-box/LRR-repeat protein At3g59170 from Arabidopsis thaliana (Mouse-ear cress).